A 221-amino-acid chain; its full sequence is Iron-sulfur cluster repair protein YtfE (221 aa).

It belongs to the RIC family. YtfE subfamily. As to quaternary structure, homodimer.

Its subcellular location is the cytoplasm. Its function is as follows. Di-iron-containing protein involved in the repair of iron-sulfur clusters damaged by oxidative and nitrosative stress conditions. The polypeptide is Iron-sulfur cluster repair protein YtfE (Dickeya chrysanthemi (strain Ech1591) (Dickeya zeae (strain Ech1591))).